A 470-amino-acid polypeptide reads, in one-letter code: ATP synthase subunit beta (470 aa).

An ATP-binding site is contributed by 157–164 (GGAGVGKT).

The protein belongs to the ATPase alpha/beta chains family. In terms of assembly, F-type ATPases have 2 components, CF(1) - the catalytic core - and CF(0) - the membrane proton channel. CF(1) has five subunits: alpha(3), beta(3), gamma(1), delta(1), epsilon(1). CF(0) has three main subunits: a(1), b(2) and c(9-12). The alpha and beta chains form an alternating ring which encloses part of the gamma chain. CF(1) is attached to CF(0) by a central stalk formed by the gamma and epsilon chains, while a peripheral stalk is formed by the delta and b chains.

It localises to the cell inner membrane. The catalysed reaction is ATP + H2O + 4 H(+)(in) = ADP + phosphate + 5 H(+)(out). In terms of biological role, produces ATP from ADP in the presence of a proton gradient across the membrane. The catalytic sites are hosted primarily by the beta subunits. The sequence is that of ATP synthase subunit beta from Geotalea uraniireducens (strain Rf4) (Geobacter uraniireducens).